The primary structure comprises 285 residues: 1,4-dihydroxy-2-naphthoyl-CoA synthase (285 aa).

Substrate contacts are provided by residues Arg45, 84–89 (SGGDQK), Tyr97, 129–133 (YSIGG), Thr155, Ser161, Tyr258, and Lys273. 154 to 156 (QTG) contributes to the hydrogencarbonate binding site.

Belongs to the enoyl-CoA hydratase/isomerase family. MenB subfamily. Homohexamer. Dimer of a homotrimer. The cofactor is hydrogencarbonate.

It catalyses the reaction 2-succinylbenzoyl-CoA + H(+) = 1,4-dihydroxy-2-naphthoyl-CoA + H2O. Its pathway is quinol/quinone metabolism; 1,4-dihydroxy-2-naphthoate biosynthesis; 1,4-dihydroxy-2-naphthoate from chorismate: step 6/7. The protein operates within quinol/quinone metabolism; menaquinone biosynthesis. Inhibited by sulfite and nitrate. Converts o-succinylbenzoyl-CoA (OSB-CoA) to 1,4-dihydroxy-2-naphthoyl-CoA (DHNA-CoA). In Escherichia coli (strain K12), this protein is 1,4-dihydroxy-2-naphthoyl-CoA synthase.